We begin with the raw amino-acid sequence, 259 residues long: Bisphosphoglycerate mutase (259 aa).

N-acetylserine is present on Ser-2. Residues 10-17 (RHGEGAWN), 23-24 (CS), Arg-62, 89-92 (ERHY), Arg-100, and 116-117 (RR) each bind substrate. The Tele-phosphohistidine intermediate role is filled by His-11. Glu-89 (proton donor/acceptor) is an active-site residue. Thr-122 carries the phosphothreonine modification. 189–190 (GN) is a substrate binding site.

This sequence belongs to the phosphoglycerate mutase family. BPG-dependent PGAM subfamily. Homodimer.

The catalysed reaction is (2R)-3-phospho-glyceroyl phosphate = (2R)-2,3-bisphosphoglycerate + H(+). It catalyses the reaction (2R)-2-phosphoglycerate = (2R)-3-phosphoglycerate. At alkaline pH BPGM favors the synthase reaction; however, at lower pH the phosphatase reaction is dominant. Inhibited by citrate. In terms of biological role, plays a major role in regulating hemoglobin oxygen affinity by controlling the levels of its allosteric effector 2,3-bisphosphoglycerate (2,3-BPG). Also exhibits mutase (EC 5.4.2.11) activity. The polypeptide is Bisphosphoglycerate mutase (BPGM) (Bos taurus (Bovine)).